Reading from the N-terminus, the 451-residue chain is CBL-interacting protein kinase 22 (451 aa).

The Protein kinase domain occupies 26 to 301 (YELGRVLGQG…IGEIFDHPWL (276 aa)). ATP contacts are provided by residues 32-40 (LGQGASSKV) and K55. The active-site Proton acceptor is the D165. The activation loop stretch occupies residues 183 to 216 (DFGLSAFADADQHLGATDGLAATHCGSPAYVAPE). In terms of domain architecture, NAF spans 330-356 (ELEQAMELNAFDIIGFASGCDLSGLIG). The segment at 361–389 (RVRFVLPGGDSKSVLDKVEKLGREEGLVV) is PPI.

The protein belongs to the protein kinase superfamily. CAMK Ser/Thr protein kinase family. SNF1 subfamily. Mn(2+) serves as cofactor.

It catalyses the reaction L-seryl-[protein] + ATP = O-phospho-L-seryl-[protein] + ADP + H(+). The catalysed reaction is L-threonyl-[protein] + ATP = O-phospho-L-threonyl-[protein] + ADP + H(+). Its function is as follows. CIPK serine-threonine protein kinases interact with CBL proteins. Binding of a CBL protein to the regulatory NAF domain of CIPK protein lead to the activation of the kinase in a calcium-dependent manner. The protein is CBL-interacting protein kinase 22 (CIPK22) of Oryza sativa subsp. japonica (Rice).